The sequence spans 646 residues: MGNACVGPNISGNGFLQTVTAAMWRPRIGAEQASSSSHGNGQVSKEAASEPATDQVQNKPPEPITMPSSKTNPETKLKPDLEIQPEEKKEKVLAEETKQKVVPEESKQEVPPEESKREVVVQPESAKPETKSESKPETTKPETTSETKPETKAEPQKPKHMRRVSSAGLRTESVLQRKTENFKEFYSLGRKLGQGQFGTTFLCLEKGTGNEYACKSISKRKLLTDEDVEDVRREIQIMHHLAGHPNVISIKGAYEDVVAVHLVMELCSGGELFDRIIQRGHYTERKAAELARTIVGVLEACHSLGVMHRDLKPENFLFVSREEDSLLKTIDFGLSMFFKPDEVFTDVVGSPYYVAPEVLRKRYGPESDVWSAGVIVYILLSGVPPFWAETEQGIFEQVLHGDLDFSSDPWPSISESAKDLVRKMLVRDPKRRLTAHQVLCHPWVQIDGVAPDKPLDSAVLSRMKQFSAMNKFKKMALRVIAESLSEEEIAGLKQMFKMIDADNSGQITFEELKAGLKRVGANLKESEILDLMQAADVDNSGTIDYKEFIAATLHLNKIEREDHLFAAFSYFDKDESGFITPDELQQACEEFGVEDARIEEMMRDVDQDKDGRIDYNEFVAMMQKGSIMGGPVKMGLENSISISLKH.

Gly2 carries the N-myristoyl glycine lipid modification. Cys5 carries S-palmitoyl cysteine lipidation. Residues 27–169 (RIGAEQASSS…HMRRVSSAGL (143 aa)) form a disordered region. Positions 32–43 (QASSSSHGNGQV) are enriched in polar residues. 2 stretches are compositionally biased toward basic and acidic residues: residues 73 to 119 (PETK…KREV) and 126 to 157 (AKPETKSESKPETTKPETTSETKPETKAEPQK). Positions 186–444 (YSLGRKLGQG…AHQVLCHPWV (259 aa)) constitute a Protein kinase domain. ATP-binding positions include 192–200 (LGQGQFGTT) and Lys215. Catalysis depends on Asp310, which acts as the Proton acceptor. Ser350 is modified (phosphoserine). The interval 450–480 (APDKPLDSAVLSRMKQFSAMNKFKKMALRVI) is autoinhibitory domain. EF-hand domains are found at residues 487–522 (EEIAGLKQMFKMIDADNSGQITFEELKAGLKRVGAN), 523–558 (LKESEILDLMQAADVDNSGTIDYKEFIAATLHLNKI), 559–592 (EREDHLFAAFSYFDKDESGFITPDELQQACEEFG), and 593–628 (VEDARIEEMMRDVDQDKDGRIDYNEFVAMMQKGSIM). The Ca(2+) site is built by Asp500, Asp502, Ser504, Gln506, Glu511, Asp536, Asp538, Ser540, Thr542, Glu547, Asp572, Asp574, Ser576, Glu583, Asp606, Asp608, Asp610, Arg612, and Glu617.

It belongs to the protein kinase superfamily. Ser/Thr protein kinase family. CDPK subfamily. Interacts with 14-3-3 proteins.

Its subcellular location is the endoplasmic reticulum membrane. The enzyme catalyses L-seryl-[protein] + ATP = O-phospho-L-seryl-[protein] + ADP + H(+). It carries out the reaction L-threonyl-[protein] + ATP = O-phospho-L-threonyl-[protein] + ADP + H(+). Its activity is regulated as follows. Activated by calcium. Autophosphorylation may play an important role in the regulation of the kinase activity. Its function is as follows. May play a role in signal transduction pathways that involve calcium as a second messenger. The chain is Calcium-dependent protein kinase 2 (CPK2) from Arabidopsis thaliana (Mouse-ear cress).